The sequence spans 469 residues: Glutamate--tRNA ligase (469 aa).

The short motif at 9–19 is the 'HIGH' region element; that stretch reads PSPTGMFHVGG. Zn(2+) is bound by residues C100, C102, C122, and D124. The 'KMSKS' region motif lies at 232-236; that stretch reads KLSKR. K235 serves as a coordination point for ATP.

It belongs to the class-I aminoacyl-tRNA synthetase family. Glutamate--tRNA ligase type 1 subfamily. Monomer. It depends on Zn(2+) as a cofactor.

It is found in the cytoplasm. The enzyme catalyses tRNA(Glu) + L-glutamate + ATP = L-glutamyl-tRNA(Glu) + AMP + diphosphate. Functionally, catalyzes the attachment of glutamate to tRNA(Glu) in a two-step reaction: glutamate is first activated by ATP to form Glu-AMP and then transferred to the acceptor end of tRNA(Glu). The polypeptide is Glutamate--tRNA ligase (Salinispora arenicola (strain CNS-205)).